Consider the following 481-residue polypeptide: MPIYTSRSCFYLLLFHIILLCSVDKTLCRQTSSFVRSEFPAVDIPIDSKEFAVPKNQFSPQQVHITQGDYDGKAVIVSWVTFIDPGKSEVVYGTSPNSYDHSAQGKTTNYTYYDYTSGYIHHCLLDKLEYDTKYYYKIGKGDAAREFWFHTPPQIHPDASYTFGIIGDLGQTYNSLSTLEHYMKSKGQTVLFVGDLSYADRYSCNNGTRWDSWGRFVERSVAYQPWIWTVGNHEIEYRPDLGEVFPFRAYLNRYPTPHLASASSSPLWYSIRRASAHIIVLSSYSPFVKYTPQWLWLSEELTRVDREKTPWLIVLMHAPLYNSNEAHYMEGESMRVAFESWFVQYKVDLVFAGHVHAYERSYRISNIVYNITSGNRYPIPDKSAPVYITVGDGGNQEGLAERFSESQPDYSAFRESSYGHSTLELRNRTHAFYQWNRNDDGKHIPVDRIIFRNQYWASNTRRRRLKKTRPSQAVERLISSY.

A signal peptide spans 1 to 36; the sequence is MPIYTSRSCFYLLLFHIILLCSVDKTLCRQTSSFVR. Asparagine 109 carries N-linked (GlcNAc...) asparagine glycosylation. The Fe cation site is built by aspartate 168, aspartate 195, and tyrosine 198. Aspartate 195 is a Zn(2+) binding site. A glycan (N-linked (GlcNAc...) asparagine) is linked at asparagine 206. Zn(2+) is bound by residues asparagine 232 and histidine 317. Asparagine 232 lines the substrate pocket. The active-site Proton donor is histidine 327. Histidine 354 serves as a coordination point for Zn(2+). 354–356 serves as a coordination point for substrate; the sequence is HVH. Residue histidine 356 participates in Fe cation binding. N-linked (GlcNAc...) asparagine glycans are attached at residues asparagine 370 and asparagine 427.

This sequence belongs to the metallophosphoesterase superfamily. Purple acid phosphatase family.

The protein localises to the vacuole lumen. It catalyses the reaction phosphoenolpyruvate + H2O = pyruvate + phosphate. In terms of biological role, phosphoenolpyruvate phosphatase that probably operates in the vacuole to release phosphate from phosphoenolpyruvate (PEP) under phosphorus starvation. This Allium cepa (Onion) protein is Phosphoenolpyruvate phosphatase (ACPEPP).